The sequence spans 139 residues: Aspartate 1-decarboxylase (139 aa).

The active-site Schiff-base intermediate with substrate; via pyruvic acid is the Ser-26. Ser-26 bears the Pyruvic acid (Ser) mark. Residue Thr-58 coordinates substrate. Tyr-59 (proton donor) is an active-site residue. 72 to 74 (GGA) is a substrate binding site.

The protein belongs to the PanD family. In terms of assembly, heterooctamer of four alpha and four beta subunits. Pyruvate is required as a cofactor. Post-translationally, is synthesized initially as an inactive proenzyme, which is activated by self-cleavage at a specific serine bond to produce a beta-subunit with a hydroxyl group at its C-terminus and an alpha-subunit with a pyruvoyl group at its N-terminus.

It is found in the cytoplasm. It catalyses the reaction L-aspartate + H(+) = beta-alanine + CO2. The protein operates within cofactor biosynthesis; (R)-pantothenate biosynthesis; beta-alanine from L-aspartate: step 1/1. Its function is as follows. Catalyzes the pyruvoyl-dependent decarboxylation of aspartate to produce beta-alanine. In Microcystis aeruginosa (strain NIES-843 / IAM M-2473), this protein is Aspartate 1-decarboxylase.